The following is a 402-amino-acid chain: Argininosuccinate synthase (402 aa).

ATP-binding positions include 10-18 (AYSGGLDTS) and Ala37. Positions 88 and 93 each coordinate L-citrulline. Gly118 lines the ATP pocket. Positions 120, 124, and 125 each coordinate L-aspartate. Asn124 is an L-citrulline binding site. L-citrulline contacts are provided by Arg128, Ser179, Ser188, Glu264, and Tyr276.

This sequence belongs to the argininosuccinate synthase family. Type 1 subfamily. In terms of assembly, homotetramer.

Its subcellular location is the cytoplasm. It catalyses the reaction L-citrulline + L-aspartate + ATP = 2-(N(omega)-L-arginino)succinate + AMP + diphosphate + H(+). It functions in the pathway amino-acid biosynthesis; L-arginine biosynthesis; L-arginine from L-ornithine and carbamoyl phosphate: step 2/3. This chain is Argininosuccinate synthase, found in Alkalilimnicola ehrlichii (strain ATCC BAA-1101 / DSM 17681 / MLHE-1).